The sequence spans 364 residues: UDP-N-acetylglucosamine--N-acetylmuramyl-(pentapeptide) pyrophosphoryl-undecaprenol N-acetylglucosamine transferase (364 aa).

Residues 10–12 (TGG), Asn124, Arg165, Ser193, Ile248, and Gln293 contribute to the UDP-N-acetyl-alpha-D-glucosamine site.

This sequence belongs to the glycosyltransferase 28 family. MurG subfamily.

Its subcellular location is the cell inner membrane. The enzyme catalyses di-trans,octa-cis-undecaprenyl diphospho-N-acetyl-alpha-D-muramoyl-L-alanyl-D-glutamyl-meso-2,6-diaminopimeloyl-D-alanyl-D-alanine + UDP-N-acetyl-alpha-D-glucosamine = di-trans,octa-cis-undecaprenyl diphospho-[N-acetyl-alpha-D-glucosaminyl-(1-&gt;4)]-N-acetyl-alpha-D-muramoyl-L-alanyl-D-glutamyl-meso-2,6-diaminopimeloyl-D-alanyl-D-alanine + UDP + H(+). Its pathway is cell wall biogenesis; peptidoglycan biosynthesis. Cell wall formation. Catalyzes the transfer of a GlcNAc subunit on undecaprenyl-pyrophosphoryl-MurNAc-pentapeptide (lipid intermediate I) to form undecaprenyl-pyrophosphoryl-MurNAc-(pentapeptide)GlcNAc (lipid intermediate II). In Geobacter metallireducens (strain ATCC 53774 / DSM 7210 / GS-15), this protein is UDP-N-acetylglucosamine--N-acetylmuramyl-(pentapeptide) pyrophosphoryl-undecaprenol N-acetylglucosamine transferase.